The primary structure comprises 84 residues: RNA-binding protein Hfq (84 aa).

One can recognise a Sm domain in the interval 9-69; it reads DRFLNILRTN…VSTIMPESFV (61 aa).

Belongs to the Hfq family. Homohexamer.

In terms of biological role, RNA chaperone that binds small regulatory RNA (sRNAs) and mRNAs to facilitate mRNA translational regulation in response to envelope stress, environmental stress and changes in metabolite concentrations. Also binds with high specificity to tRNAs. This is RNA-binding protein Hfq from Thermosipho africanus (strain TCF52B).